The chain runs to 203 residues: Elongation factor Ts (203 aa).

The interval 80 to 83 (TDFV) is involved in Mg(2+) ion dislocation from EF-Tu.

The protein belongs to the EF-Ts family.

It is found in the cytoplasm. Its function is as follows. Associates with the EF-Tu.GDP complex and induces the exchange of GDP to GTP. It remains bound to the aminoacyl-tRNA.EF-Tu.GTP complex up to the GTP hydrolysis stage on the ribosome. The chain is Elongation factor Ts from Moorella thermoacetica (strain ATCC 39073 / JCM 9320).